The sequence spans 189 residues: Protein OXIDATIVE STRESS 3 LIKE 2 (189 aa).

Disordered regions lie at residues 22–49 (SSSTSSDSIGENSDDDEGGENEIESSYN) and 128–147 (AMSQREGDSSSSGDDSLPTL). Residues 33-44 (NSDDDEGGENEI) are compositionally biased toward acidic residues.

It localises to the nucleus. The chain is Protein OXIDATIVE STRESS 3 LIKE 2 from Arabidopsis thaliana (Mouse-ear cress).